A 213-amino-acid polypeptide reads, in one-letter code: Adenylate kinase (213 aa).

10–15 contacts ATP; it reads GAGKGT. The segment at 30 to 59 is NMP; it reads STGDMFRAAIKEGTEMGKKAKEYMDKGALV. Residues Thr-31, Arg-36, 57–59, 85–88, and Gln-92 each bind AMP; these read ALV and GFPR. Residues 126-163 are LID; it reads GRRVCKNCGASYHVIFNPPQAEGKCNSCNGELYQRSDD. Position 127 (Arg-127) interacts with ATP. Zn(2+)-binding residues include Cys-130 and Cys-133. Residue 136-137 coordinates ATP; the sequence is SY. Residues Cys-150 and Cys-153 each coordinate Zn(2+). 2 residues coordinate AMP: Arg-160 and Arg-171. Residue Gln-199 coordinates ATP.

Belongs to the adenylate kinase family. In terms of assembly, monomer.

Its subcellular location is the cytoplasm. The enzyme catalyses AMP + ATP = 2 ADP. Its pathway is purine metabolism; AMP biosynthesis via salvage pathway; AMP from ADP: step 1/1. Its function is as follows. Catalyzes the reversible transfer of the terminal phosphate group between ATP and AMP. Plays an important role in cellular energy homeostasis and in adenine nucleotide metabolism. The protein is Adenylate kinase of Desulforamulus reducens (strain ATCC BAA-1160 / DSM 100696 / MI-1) (Desulfotomaculum reducens).